We begin with the raw amino-acid sequence, 113 residues long: Cell cycle protein GpsB (113 aa).

The stretch at 36–68 forms a coiled coil; that stretch reads LDMVIKDYSTFTQEIEALQAENIRLVQELDNAP.

Belongs to the GpsB family. Forms polymers through the coiled coil domains. Interacts with PBP1, MreC and EzrA.

The protein resides in the cytoplasm. Divisome component that associates with the complex late in its assembly, after the Z-ring is formed, and is dependent on DivIC and PBP2B for its recruitment to the divisome. Together with EzrA, is a key component of the system that regulates PBP1 localization during cell cycle progression. Its main role could be the removal of PBP1 from the cell pole after pole maturation is completed. Also contributes to the recruitment of PBP1 to the division complex. Not essential for septum formation. The protein is Cell cycle protein GpsB of Listeria innocua serovar 6a (strain ATCC BAA-680 / CLIP 11262).